Reading from the N-terminus, the 447-residue chain is MATDLQVTTNKLSNKETQLTVKVPVEKIQNKVEGRIRQVAKTAKIDGFRKGNVPMSHIRSQYGAGIQQEVINDVIRDTVFEAIKSEDIRAVGMPNIDDVKLEDDFLVYQATVEIFPEIDIQGIDEIEVERHTATVNEEDVDTMIENLQKQREEFVEKKGKADKGNQVTFDFEGSIDGEKFEGGSAEDFKLVIGSNQMIPGFEAGIKGMKAGEEKTIDVTFPEDYQAENLAGKEAQFKINVKLVEKSKLPEMDDAFLELFGVKEGGVEKLKDDVRKNMEREIKNAARSQVKQATFDALLEKNEFDVPNAMLEQEIERQRNMMMQRFSQQFGANADSFDKDMLPNELFEEQALRAARLGIIVARVIDTKGLEVDQARVETFIKEAAENYEDPAEVIEYYTTDKQQRANIESVVLEDQVVDYLIGQGKVTDKEVSYQDLLAAQQQQQQAM.

Residues 164–249 (GNQVTFDFEG…VKLVEKSKLP (86 aa)) form the PPIase FKBP-type domain.

Belongs to the FKBP-type PPIase family. Tig subfamily.

It is found in the cytoplasm. It carries out the reaction [protein]-peptidylproline (omega=180) = [protein]-peptidylproline (omega=0). Functionally, involved in protein export. Acts as a chaperone by maintaining the newly synthesized protein in an open conformation. Functions as a peptidyl-prolyl cis-trans isomerase. This Psychrobacter arcticus (strain DSM 17307 / VKM B-2377 / 273-4) protein is Trigger factor.